A 629-amino-acid chain; its full sequence is Serine/threonine-protein kinase ICK (629 aa).

Residues 4–284 (YTTIKQLGDG…ASQALRYPYF (281 aa)) form the Protein kinase domain. Residues 10–18 (LGDGTYGSV) and Lys33 each bind ATP. Asp125 functions as the Proton acceptor in the catalytic mechanism. The residue at position 157 (Thr157) is a Phosphothreonine. Position 159 is a phosphotyrosine (Tyr159). At Ser161 the chain carries Phosphoserine. Disordered stretches follow at residues 292 to 322 (ISTQ…PAQA), 454 to 482 (PSEP…QSTA), and 579 to 629 (GYSS…PSRR). A compositionally biased stretch (pro residues) spans 309 to 321 (GPPPYVKPAPPAQ). A compositionally biased stretch (polar residues) spans 460–482 (TGTSVSTQASSQRRDTPTLQSTA).

The protein belongs to the protein kinase superfamily. CMGC Ser/Thr protein kinase family. CDC2/CDKX subfamily. Mg(2+) is required as a cofactor. In terms of processing, autophosphorylated on serine and threonine residues. Phosphorylation at Thr-157 increases kinase activity. In terms of tissue distribution, expressed in embryonic heart from day 11. Highly expressed in the uterus and at lower levels in brain, heart, lung, kidney, skeletal muscle, ovary and liver in adult tissues.

Its subcellular location is the cytoplasm. The protein localises to the cell projection. It localises to the cilium. The protein resides in the nucleus. It is found in the cytoskeleton. Its subcellular location is the cilium basal body. It carries out the reaction L-seryl-[protein] + ATP = O-phospho-L-seryl-[protein] + ADP + H(+). It catalyses the reaction L-threonyl-[protein] + ATP = O-phospho-L-threonyl-[protein] + ADP + H(+). Its function is as follows. Required for ciliogenesis, particularly in neuronal and retinal progenitor cells. Phosphorylates KIF3A. Involved in the control of ciliary length. Regulates the ciliary localization of SHH pathway components as well as the localization of IFT components at ciliary tips. May play a role in cardiac development. Regulates intraflagellar transport (IFT) speed and negatively regulates cilium length in a cAMP and mTORC1 signaling-dependent manner and this regulation requires its kinase activity. In Rattus norvegicus (Rat), this protein is Serine/threonine-protein kinase ICK (Cilk1).